A 215-amino-acid chain; its full sequence is Probable serine/threonine-protein kinase 2 (215 aa).

The Protein kinase domain occupies 1–205 (MKPEQLVYLN…WLLKEMEQLL (205 aa)).

It belongs to the protein kinase superfamily. Ser/Thr protein kinase family. In terms of assembly, interacts with the kinase domain of host EIF2AK2.

The protein localises to the host cytoplasm. It carries out the reaction L-seryl-[protein] + ATP = O-phospho-L-seryl-[protein] + ADP + H(+). The enzyme catalyses L-threonyl-[protein] + ATP = O-phospho-L-threonyl-[protein] + ADP + H(+). In terms of biological role, plays a role in the inhibition of host eIF2alpha/EIF2S1 phosphorylation, thereby increasing viral fitness. In the insect host, targets the endogenous insect heme-regulated inhibitor (HRI)-like eIF2alpha kinase. This chain is Probable serine/threonine-protein kinase 2 (PK2), found in Autographa californica nuclear polyhedrosis virus (AcMNPV).